The chain runs to 48 residues: Palustrin-3b (48 aa).

C43 and C48 are oxidised to a cystine.

Expressed by the skin glands.

It localises to the secreted. Functionally, antimicrobial activity against Gram-negative bacterium E.coli. In Lithobates palustris (Pickerel frog), this protein is Palustrin-3b.